Reading from the N-terminus, the 274-residue chain is WIMGHMVNGLEQVSEFLNLGANAIEFDIDFDNNGIAKITHHGIPCDCGRLCTKQTVFTEYLDNIRHVTTPGDPKFREQLILLALDLKLQRIPVEKAYAAGVDVATKLLDHYWQRGKSKARAYILLNIPLVEDYEFIRAFKDMLKNEGYEQYNDKVGVNFTGNEDLDEIRKVLEKVGVDKHVWQADGITSCFTRGTDRLTEALKRRDTPGYNYAYKVYAWTLVKYSTMRRSLRLGVDGVMSNYPDRVVEVLKEEEFAGKFRMATYDDNPWKKFTS.

Residue His5 is part of the active site. The Mg(2+) site is built by Glu25 and Asp27. His41 serves as the catalytic Nucleophile. 2 disulfide bridges follow: Cys45–Cys51 and Cys47–Cys190. Residue Asp85 participates in Mg(2+) binding.

The protein belongs to the arthropod phospholipase D family. Class II subfamily. Mg(2+) serves as cofactor. Expressed by the venom gland.

It localises to the secreted. The catalysed reaction is an N-(acyl)-sphingosylphosphocholine = an N-(acyl)-sphingosyl-1,3-cyclic phosphate + choline. The enzyme catalyses an N-(acyl)-sphingosylphosphoethanolamine = an N-(acyl)-sphingosyl-1,3-cyclic phosphate + ethanolamine. It carries out the reaction a 1-acyl-sn-glycero-3-phosphocholine = a 1-acyl-sn-glycero-2,3-cyclic phosphate + choline. It catalyses the reaction a 1-acyl-sn-glycero-3-phosphoethanolamine = a 1-acyl-sn-glycero-2,3-cyclic phosphate + ethanolamine. Its function is as follows. Dermonecrotic toxins cleave the phosphodiester linkage between the phosphate and headgroup of certain phospholipids (sphingolipid and lysolipid substrates), forming an alcohol (often choline) and a cyclic phosphate. This toxin acts on sphingomyelin (SM). It may also act on ceramide phosphoethanolamine (CPE), lysophosphatidylcholine (LPC) and lysophosphatidylethanolamine (LPE), but not on lysophosphatidylserine (LPS), and lysophosphatidylglycerol (LPG). It acts by transphosphatidylation, releasing exclusively cyclic phosphate products as second products. Induces dermonecrosis, hemolysis, increased vascular permeability, edema, inflammatory response, and platelet aggregation. The chain is Dermonecrotic toxin SaSicTox-betaIIB1 from Sicarius albospinosus (Six-eyed crab spider).